Consider the following 155-residue polypeptide: V-type proton ATPase 16 kDa proteolipid subunit c (155 aa).

The Lumenal segment spans residues M1 to Y10. A helical transmembrane segment spans residues A11–G33. At T34–S55 the chain is on the cytoplasmic side. Residues I56 to I76 traverse the membrane as a helical segment. The Lumenal segment spans residues A77 to Q92. The chain crosses the membrane as a helical span at residues L93 to G114. At D115 to M131 the chain is on the cytoplasmic side. Residues I132–L152 traverse the membrane as a helical segment. Topologically, residues S153–K155 are lumenal.

The protein belongs to the V-ATPase proteolipid subunit family. As to quaternary structure, V-ATPase is a heteromultimeric enzyme made up of two complexes: the ATP-hydrolytic V1 complex and the proton translocation V0 complex. The V1 complex consists of three catalytic AB heterodimers that form a heterohexamer, three peripheral stalks each consisting of EG heterodimers, one central rotor including subunits D and F, and the regulatory subunits C and H. The proton translocation complex V0 consists of the proton transport subunit a, a ring of proteolipid subunits c9c'', rotary subunit d, subunits e and f, and the accessory subunits ATP6AP1/Ac45 and ATP6AP2/PRR. Interacts with the V0 complex V-ATPase subunit a4 ATP6V0A4. Interacts with LASS2. Interacts with RNF182; this interaction leads to ubiquitination and degradation via the proteasome pathway. Post-translationally, ubiquitinated by RNF182, leading to its degradation via the ubiquitin-proteasome pathway. Expressed in brain (at protein level).

The protein resides in the cytoplasmic vesicle. The protein localises to the clathrin-coated vesicle membrane. It localises to the secretory vesicle. It is found in the synaptic vesicle membrane. Functionally, proton-conducting pore forming subunit of the V0 complex of vacuolar(H+)-ATPase (V-ATPase), a multisubunit enzyme composed of a peripheral complex (V1) that hydrolyzes ATP and a membrane integral complex (V0) that translocates protons. V-ATPase is responsible for acidifying and maintaining the pH of intracellular compartments and in some cell types, is targeted to the plasma membrane, where it is responsible for acidifying the extracellular environment. The protein is V-type proton ATPase 16 kDa proteolipid subunit c (ATP6V0C) of Bos taurus (Bovine).